Here is a 136-residue protein sequence, read N- to C-terminus: Transcription antitermination protein NusB (136 aa).

The protein belongs to the NusB family.

Its function is as follows. Involved in transcription antitermination. Required for transcription of ribosomal RNA (rRNA) genes. Binds specifically to the boxA antiterminator sequence of the ribosomal RNA (rrn) operons. The sequence is that of Transcription antitermination protein NusB from Pseudoalteromonas translucida (strain TAC 125).